The primary structure comprises 524 residues: Casein kinase I homolog 3 (524 aa).

In terms of domain architecture, Protein kinase spans 14-319; the sequence is YAVGPKIGEG…YLISLMDDAL (306 aa). ATP contacts are provided by residues 20–28 and Lys60; that span reads IGEGSFGVI. Asp150 acts as the Proton acceptor in catalysis. Disordered regions lie at residues 352–414 and 427–474; these read HGYG…KQQH and PETH…EHNL. Low complexity predominate over residues 360 to 373; sequence RVNGNTARNNVNTN. Composition is skewed to polar residues over residues 374 to 413 and 429 to 474; these read SKTRNTTPVATPKQQAQNSYNKDNSKSRISSNPQSFTKQQ and THSN…EHNL. Residues 444 to 447 carry the YXXZ targeting signal motif; the sequence is YDSI. Residues Cys517, Cys518, Cys519, Cys520, Cys522, Cys523, and Cys524 are each lipidated (S-palmitoyl cysteine).

This sequence belongs to the protein kinase superfamily. CK1 Ser/Thr protein kinase family. Casein kinase I subfamily.

The protein resides in the cell membrane. It localises to the nucleus membrane. Its subcellular location is the vacuole membrane. The enzyme catalyses L-seryl-[protein] + ATP = O-phospho-L-seryl-[protein] + ADP + H(+). It carries out the reaction L-threonyl-[protein] + ATP = O-phospho-L-threonyl-[protein] + ADP + H(+). In terms of biological role, casein kinases are operationally defined by their preferential utilization of acidic proteins such as caseins as substrates. Phosphorylates MON1, inhibiting the guanine nucleotide exchange factor activity of the MON1-CCZ1 complex, possibly by preventing its recruitment to membranes by small GTPase RAB5 homologs. This is Casein kinase I homolog 3 (YCK3) from Saccharomyces cerevisiae (strain ATCC 204508 / S288c) (Baker's yeast).